Consider the following 193-residue polypeptide: Ribosomal RNA large subunit methyltransferase E (193 aa).

S-adenosyl-L-methionine is bound by residues G51, W53, D69, D85, and D108. The active-site Proton acceptor is K148.

This sequence belongs to the class I-like SAM-binding methyltransferase superfamily. RNA methyltransferase RlmE family.

The protein resides in the cytoplasm. The enzyme catalyses uridine(2552) in 23S rRNA + S-adenosyl-L-methionine = 2'-O-methyluridine(2552) in 23S rRNA + S-adenosyl-L-homocysteine + H(+). Specifically methylates the uridine in position 2552 of 23S rRNA at the 2'-O position of the ribose in the fully assembled 50S ribosomal subunit. This Methanoregula boonei (strain DSM 21154 / JCM 14090 / 6A8) protein is Ribosomal RNA large subunit methyltransferase E.